The following is a 401-amino-acid chain: Elongation factor Tu, apicoplast (401 aa).

Residues 10 to 206 enclose the tr-type G domain; the sequence is KPHINIGTIG…ALDSYIPLPK (197 aa). Residues 19 to 26 form a G1 region; it reads GHVDHGKT. 19–26 contributes to the GTP binding site; the sequence is GHVDHGKT. Residue T26 participates in Mg(2+) binding. Residues 60–64 are G2; sequence GITIK. The interval 81-84 is G3; sequence DCPG. GTP contacts are provided by residues 81 to 85 and 136 to 139; these read DCPGH and NKID. Positions 136–139 are G4; the sequence is NKID. A G5 region spans residues 173 to 175; sequence SAL.

This sequence belongs to the TRAFAC class translation factor GTPase superfamily. Classic translation factor GTPase family. EF-Tu/EF-1A subfamily. As to quaternary structure, monomer.

The protein resides in the plastid. The protein localises to the apicoplast. The enzyme catalyses GTP + H2O = GDP + phosphate + H(+). In terms of biological role, GTP hydrolase that promotes the GTP-dependent binding of aminoacyl-tRNA to the A-site of ribosomes during protein biosynthesis. This is Elongation factor Tu, apicoplast (tufA) from Toxoplasma gondii.